The following is a 216-amino-acid chain: Uridine kinase (216 aa).

16-23 (GASASGKS) is a binding site for ATP.

This sequence belongs to the uridine kinase family.

It localises to the cytoplasm. The enzyme catalyses uridine + ATP = UMP + ADP + H(+). It carries out the reaction cytidine + ATP = CMP + ADP + H(+). It participates in pyrimidine metabolism; CTP biosynthesis via salvage pathway; CTP from cytidine: step 1/3. Its pathway is pyrimidine metabolism; UMP biosynthesis via salvage pathway; UMP from uridine: step 1/1. This Mannheimia succiniciproducens (strain KCTC 0769BP / MBEL55E) protein is Uridine kinase.